A 571-amino-acid polypeptide reads, in one-letter code: Phototropic-responsive NPH3 family protein NPY1 (571 aa).

The BTB domain maps to 29-97; the sequence is SDVTIHVGEV…CYGMTVTLNA (69 aa). An NPH3 domain is found at 210-468; sequence DWWVEDVCEL…VQVLYFEQLR (259 aa). Tyrosine 409 carries the post-translational modification Phosphotyrosine. Residues 475 to 571 form a disordered region; sequence ASVAASSHSP…SSRRRRHSIS (97 aa). Basic and acidic residues predominate over residues 484-504; sequence PVEKTEENKGEEATKKVELSK. A compositionally biased stretch (low complexity) spans 540–562; that stretch reads SNKSSEVSSGSSQSPPAKSSSSS.

It belongs to the NPH3 family. Component of a complex made of PINs (e.g. PIN1 and PIN2), MAB4/MELs (e.g. NPY1/MAB4 and NPY5/MEL1) and AGC kinases (e.g. D6PK and PID) at the plasma membrane. Binds directly to PIN2 and PID. Accumulates in organ primordia such as cotyledons, leaves and floral organs. Expressed mainly in the apical regions of embryos including cotyledon tips and the apical meristem. Induced by the transcription factor ARF5/MP at the periphery of inflorescence meristems. Highly expressed in primary root tips and radicles.

The protein localises to the late endosome. It is found in the cell membrane. Its subcellular location is the cytoplasm. It localises to the cytosol. The protein operates within protein modification; protein ubiquitination. In terms of biological role, may act as a substrate-specific adapter of an E3 ubiquitin-protein ligase complex (CUL3-RBX1-BTB) which mediates the ubiquitination and subsequent proteasomal degradation of target proteins. Coregulates with PID the auxin-mediated plant organogenesis. Regulates basipetal PIN proteins (e.g. PIN1) polarization to establish inward auxin transport from the L1 surface of incipient organ primordia; this process is essential for the progression of flower organs development. Recruited to the plasma membrane by PINs (e.g. PIN1 and PIN2) and, in concert with AGC kinases-mediated (e.g. D6PK and PID) PINs phosphorylation, maintains their cell polarity (apical or basal) through limiting lateral diffusion-based escape. Induces auxin response in inner cell layers through a shift in PIN1 localization. Influences cotyledon development by regulating auxin distribution mainly in the protodermal cell layer. May play an essential role in root gravitropic responses. In Arabidopsis thaliana (Mouse-ear cress), this protein is Phototropic-responsive NPH3 family protein NPY1.